A 482-amino-acid chain; its full sequence is MSDKQATVLVVDDETRSQDALRRTLDEEFRVLTVSSADEARALLLRQPVSVILCDQRMPGLTGVEFLKEVRERWPEIVRIVISGYTDSEDIIAGVNEAGIYQYILKPWVPDHLIDTVRQAVEAQGLQGDMHRLDLELRTSTPVLRQRSSQKLASAQSAFNFERIVRAPGSPLDAVCEVAARVARYDLPVMVLGESGTGKELLARAIHYASPRAARAFVSENCAAVPDNLLESELFGHKRGAFTGAYEDHAGLFQRANGGTIFLDEIGDTSPAFQVKLLRVLQEGEVRPVGSPRWIPVDVRVIAATHCNLESDVHAGRFREDLYYRIAGVTISMPPLRERSGDLQPIAAKLLEQVAQELARPGLYFGGDALAAMMAYPWPGNIRELRNEIYRAVALSSGEEIRAQLFSRKVLHGQPGTVKRGPHVQTFPQSGTLQERLDAIEAVVLKEALLRHRWNKTHAAKELGLSRVGLRQKLLRFGLEEK.

Residues 7–121 (TVLVVDDETR…HLIDTVRQAV (115 aa)) form the Response regulatory domain. A 4-aspartylphosphate modification is found at aspartate 55. Residues 167-394 (APGSPLDAVC…LRNEIYRAVA (228 aa)) enclose the Sigma-54 factor interaction domain. ATP contacts are provided by residues 193–200 (GESGTGKE) and 265–274 (EIGDTSPAFQ). The segment at residues 456-475 (KTHAAKELGLSRVGLRQKLL) is a DNA-binding region (H-T-H motif).

The protein resides in the cytoplasm. In terms of biological role, probable member of the two-component regulatory system involved in the regulation of the hydrogenase activity. HoxA is probably phosphorylated by a sensory component (which could be HoxX) and then acts in conjunction with sigma-54 as a transcriptional activator. This is Hydrogenase transcriptional regulatory protein HoxA (hoxA) from Cupriavidus necator (strain ATCC 17699 / DSM 428 / KCTC 22496 / NCIMB 10442 / H16 / Stanier 337) (Ralstonia eutropha).